The sequence spans 337 residues: Inositol 2-dehydrogenase (337 aa).

Belongs to the Gfo/Idh/MocA family. In terms of assembly, homotetramer.

The catalysed reaction is myo-inositol + NAD(+) = scyllo-inosose + NADH + H(+). Functionally, involved in the oxidation of myo-inositol (MI) to 2-keto-myo-inositol (2KMI or 2-inosose). The protein is Inositol 2-dehydrogenase of Pseudarthrobacter chlorophenolicus (strain ATCC 700700 / DSM 12829 / CIP 107037 / JCM 12360 / KCTC 9906 / NCIMB 13794 / A6) (Arthrobacter chlorophenolicus).